Consider the following 165-residue polypeptide: Large ribosomal subunit protein eL15 (165 aa).

Positions 126–147 (TSAGRKSRGLGKGHKFHHTIGG) are disordered. Over residues 130–143 (RKSRGLGKGHKFHH) the composition is skewed to basic residues.

It belongs to the eukaryotic ribosomal protein eL15 family. Component of the large ribosomal subunit.

The protein localises to the cytoplasm. Component of the large ribosomal subunit. The ribosome is a large ribonucleoprotein complex responsible for the synthesis of proteins in the cell. This Gallus gallus (Chicken) protein is Large ribosomal subunit protein eL15 (RPL15).